We begin with the raw amino-acid sequence, 147 residues long: SsrA-binding protein (147 aa).

The protein belongs to the SmpB family.

It localises to the cytoplasm. Functionally, required for rescue of stalled ribosomes mediated by trans-translation. Binds to transfer-messenger RNA (tmRNA), required for stable association of tmRNA with ribosomes. tmRNA and SmpB together mimic tRNA shape, replacing the anticodon stem-loop with SmpB. tmRNA is encoded by the ssrA gene; the 2 termini fold to resemble tRNA(Ala) and it encodes a 'tag peptide', a short internal open reading frame. During trans-translation Ala-aminoacylated tmRNA acts like a tRNA, entering the A-site of stalled ribosomes, displacing the stalled mRNA. The ribosome then switches to translate the ORF on the tmRNA; the nascent peptide is terminated with the 'tag peptide' encoded by the tmRNA and targeted for degradation. The ribosome is freed to recommence translation, which seems to be the essential function of trans-translation. This is SsrA-binding protein from Mycoplasma pneumoniae (strain ATCC 29342 / M129 / Subtype 1) (Mycoplasmoides pneumoniae).